Reading from the N-terminus, the 90-residue chain is Probable Fe(2+)-trafficking protein (90 aa).

This sequence belongs to the Fe(2+)-trafficking protein family.

In terms of biological role, could be a mediator in iron transactions between iron acquisition and iron-requiring processes, such as synthesis and/or repair of Fe-S clusters in biosynthetic enzymes. The protein is Probable Fe(2+)-trafficking protein of Haemophilus influenzae (strain 86-028NP).